The primary structure comprises 322 residues: Cytochrome c biogenesis protein CcsA (322 aa).

8 helical membrane passes run 17–37 (VVSI…IVGL), 44–64 (GMIA…IYLG), 71–91 (LYES…VPYF), 98–118 (LSAL…SGLL), 143–163 (MVLG…LLVI), 225–245 (VISL…VWAN), 258–273 (ETWA…IYLH), and 286–306 (AIVA…VNLL).

The protein belongs to the CcmF/CycK/Ccl1/NrfE/CcsA family. As to quaternary structure, may interact with Ccs1.

It localises to the plastid. The protein resides in the chloroplast thylakoid membrane. Functionally, required during biogenesis of c-type cytochromes (cytochrome c6 and cytochrome f) at the step of heme attachment. This Vitis vinifera (Grape) protein is Cytochrome c biogenesis protein CcsA.